A 697-amino-acid polypeptide reads, in one-letter code: Potassium channel KAT2 (697 aa).

At 1–63 (MSISCTRNFF…PFDPRFRGWE (63 aa)) the chain is on the cytoplasmic side. The helical transmembrane segment at 64 to 84 (MWLVILVIYSAWICPFEFAFI) threads the bilayer. The Extracellular portion of the chain corresponds to 85–91 (TYKKDAL). The chain crosses the membrane as a helical span at residues 92-112 (FIIDNIVNGFFAIDIILTFFV). Topologically, residues 113–134 (AYLDSHSYLLVDKPKKIAIRYL) are cytoplasmic. Residues 135–155 (STWFAFDVCSTAPFQSLSLLF) traverse the membrane as a helical segment. Topologically, residues 156–165 (KYNGSEIGFR) are extracellular. A glycan (N-linked (GlcNAc...) asparagine) is linked at Asn158. Residues 166 to 186 (VLSMLRLWRLRRVSSLFARLE) traverse the membrane as a helical; Voltage-sensor segment. The Cytoplasmic segment spans residues 187–200 (KDIRFNYFWTRCTK). A helical membrane pass occupies residues 201-221 (LISVTLFAVHCAGCFAYLIAD). The Extracellular segment spans residues 222–248 (QYHDPTKTWIGAVYPNFKETSVWSRYV). The segment at residues 249–268 (TALYWSITTLTTTGYGDLHA) is an intramembrane region (pore-forming). The Extracellular portion of the chain corresponds to 269–272 (ENPR). Residues 273-293 (EMLFFVFFMLFNLGFTSYLIG) traverse the membrane as a helical segment. Residues 294 to 697 (NMTNLVVHWT…HLYILINENS (404 aa)) are Cytoplasmic-facing. 377–496 (LFHGVSRNFL…RVIMNNLFMK (120 aa)) is an a nucleoside 3',5'-cyclic phosphate binding site. Positions 629–697 (RVTIHLKSRD…HLYILINENS (69 aa)) constitute a KHA domain.

This sequence belongs to the potassium channel family. Plant (TC 1.A.1.4) subfamily. The potassium channel is probably composed of a homo- or heterotetrameric complex of pore-forming subunits. May interact with KAT1. Interacts with SLAC1. Expressed in guard cells of hypocotyls, stems leaves and petioles. Detected also in the phloem of minor veins and in flower at a lower level.

Its subcellular location is the membrane. Highly selective inward-rectifying potassium channel. This voltage-dependent channel could mediate long-term potassium influx into guard cells leading to stomatal opening. Assuming opened or closed conformations in response to the voltage difference across the membrane, the channel is activated by hyperpolarization. The channel activity is enhanced upon external acidification. The sequence is that of Potassium channel KAT2 (KAT2) from Arabidopsis thaliana (Mouse-ear cress).